The following is a 713-amino-acid chain: Polyribonucleotide nucleotidyltransferase (713 aa).

Residues aspartate 491 and aspartate 497 each contribute to the Mg(2+) site. The KH domain occupies 558–617 (PRMITIKINPEKIRDVIGKGGSVIRALTEETGTTIDISDDGVVTIASTSSDGMAEAKKRI). Positions 627–695 (GQVYEGTVLK…EKGRVRLSAK (69 aa)) constitute an S1 motif domain.

Belongs to the polyribonucleotide nucleotidyltransferase family. Requires Mg(2+) as cofactor.

Its subcellular location is the cytoplasm. The enzyme catalyses RNA(n+1) + phosphate = RNA(n) + a ribonucleoside 5'-diphosphate. In terms of biological role, involved in mRNA degradation. Catalyzes the phosphorolysis of single-stranded polyribonucleotides processively in the 3'- to 5'-direction. The protein is Polyribonucleotide nucleotidyltransferase of Burkholderia cenocepacia (strain ATCC BAA-245 / DSM 16553 / LMG 16656 / NCTC 13227 / J2315 / CF5610) (Burkholderia cepacia (strain J2315)).